Reading from the N-terminus, the 717-residue chain is Copine family protein 5 (717 aa).

One can recognise a C2 domain in the interval 193 to 318 (YLGGIIVSAE…KYGPGSDNVY (126 aa)). The 191-residue stretch at 377–567 (ELDQRRFDGE…LNKSRIAETA (191 aa)) folds into the VWFA domain.

This sequence belongs to the copine family.

The polypeptide is Copine family protein 5 (cpna-5) (Caenorhabditis elegans).